The chain runs to 86 residues: Translation machinery-associated protein 10 (86 aa).

A phosphoserine mark is found at S28 and S79. Residues 63-86 (NKTRRGSNSQNNERRLSDLQQYHI) form a disordered region.

Belongs to the STF2 family. In terms of assembly, associates with ribosomes.

The protein resides in the cytoplasm. The protein localises to the nucleus. Its function is as follows. May be involved in inhibition of the reverse ATPase reaction of mitochondrial F(1)F(0)-type ATP synthase. This is Translation machinery-associated protein 10 from Saccharomyces cerevisiae (strain ATCC 204508 / S288c) (Baker's yeast).